Reading from the N-terminus, the 715-residue chain is MLPEEDLKIIKKELGREPTLVEQGCFLNLWSEHCSYRSSAPLLKTFTSKGENVIIGPGDDAAIIKFDDGYVLAIGMESHNHPSYVDPYNGAATGIGGIVRDIISMGARPIALMDPLYFGPLDTPKNMFLFEQIIKGIAGYGNCIGVPVVNGETFFDRRYSGNPLVNVVAVGLCREEEVITARSQKAGNKLVLAGSSTGKDGLGGASFASRDLSESAEAEDRPSVQVGDPYTEKLVIEMTLEAMEKGYIKSCKDLGAAGLGGASAELAAKGGLGAHITADAVTQREPNMNAYEILLAESQERMVFEVAPEDVDAVLALVAKYDLNGAVVGYLTEKPNYTVEFKGEVVVDIPIDFLTGGAPTCEKSSVAPIPQVEEGKAPKTPEDLKAAFLKVISSYNIASKEWIYRQYDHEVQLRTVIKPGEDAGVLKITDKKGLVLSCGCQPRATLLDPYNGGKNVVIENAMNLAVKGADGLAIVNCLNFGNPDRPEIYWQLKNSVLGLGDGARELSIPVVGGNVSLYNESDEFKTAILPTPSIGIIGKVNFETPLPSSFFAKSGDAIILVGETTADMGGSEYYACFEALNAGKVPSVPKNAPEIIKAVIEAARSGKLSSAHDLSLGGIAAGLARMCRNSGAKVDLSEVSELKAEELLFSEAPARALLATSEPEAVLEILKDVPHMVIGKVEGNSLEVKGKDFEISLSLKEISDAYSSLTRFMMR.

His33 is a catalytic residue. Position 36 (Tyr36) interacts with ATP. Glu77 serves as a coordination point for Mg(2+). Substrate is bound by residues 78 to 81 (SHNH) and Arg100. His79 serves as the catalytic Proton acceptor. Residue Asp101 participates in Mg(2+) binding. Gln225 contributes to the substrate binding site. Asp253 provides a ligand contact to Mg(2+). Position 297-299 (297-299 (ESQ)) interacts with substrate. The ATP site is built by Asn476 and Gly513. Residue Asn514 coordinates Mg(2+). Residue Ser516 participates in substrate binding.

It belongs to the FGAMS family. As to quaternary structure, monomer. Part of the FGAM synthase complex composed of 1 PurL, 1 PurQ and 2 PurS subunits.

The protein resides in the cytoplasm. The catalysed reaction is N(2)-formyl-N(1)-(5-phospho-beta-D-ribosyl)glycinamide + L-glutamine + ATP + H2O = 2-formamido-N(1)-(5-O-phospho-beta-D-ribosyl)acetamidine + L-glutamate + ADP + phosphate + H(+). Its pathway is purine metabolism; IMP biosynthesis via de novo pathway; 5-amino-1-(5-phospho-D-ribosyl)imidazole from N(2)-formyl-N(1)-(5-phospho-D-ribosyl)glycinamide: step 1/2. Part of the phosphoribosylformylglycinamidine synthase complex involved in the purines biosynthetic pathway. Catalyzes the ATP-dependent conversion of formylglycinamide ribonucleotide (FGAR) and glutamine to yield formylglycinamidine ribonucleotide (FGAM) and glutamate. The FGAM synthase complex is composed of three subunits. PurQ produces an ammonia molecule by converting glutamine to glutamate. PurL transfers the ammonia molecule to FGAR to form FGAM in an ATP-dependent manner. PurS interacts with PurQ and PurL and is thought to assist in the transfer of the ammonia molecule from PurQ to PurL. The sequence is that of Phosphoribosylformylglycinamidine synthase subunit PurL from Methanosarcina barkeri (strain Fusaro / DSM 804).